Reading from the N-terminus, the 270-residue chain is 4-hydroxy-tetrahydrodipicolinate reductase (270 aa).

NAD(+) contacts are provided by residues 8–13 (GALGRM), Asp-34, 102–104 (GTT), and 128–131 (SQNY). The active-site Proton donor/acceptor is the His-160. His-161 provides a ligand contact to (S)-2,3,4,5-tetrahydrodipicolinate. Lys-164 acts as the Proton donor in catalysis. 170–171 (GT) serves as a coordination point for (S)-2,3,4,5-tetrahydrodipicolinate.

Belongs to the DapB family.

The protein resides in the cytoplasm. The enzyme catalyses (S)-2,3,4,5-tetrahydrodipicolinate + NAD(+) + H2O = (2S,4S)-4-hydroxy-2,3,4,5-tetrahydrodipicolinate + NADH + H(+). It catalyses the reaction (S)-2,3,4,5-tetrahydrodipicolinate + NADP(+) + H2O = (2S,4S)-4-hydroxy-2,3,4,5-tetrahydrodipicolinate + NADPH + H(+). Its pathway is amino-acid biosynthesis; L-lysine biosynthesis via DAP pathway; (S)-tetrahydrodipicolinate from L-aspartate: step 4/4. Catalyzes the conversion of 4-hydroxy-tetrahydrodipicolinate (HTPA) to tetrahydrodipicolinate. This is 4-hydroxy-tetrahydrodipicolinate reductase from Methanococcus maripaludis (strain C5 / ATCC BAA-1333).